Here is a 255-residue protein sequence, read N- to C-terminus: Small ribosomal subunit protein eS4 (255 aa).

The S4 RNA-binding domain maps to 43–115 (IPLLILVRDV…PTRFFTLHPI (73 aa)).

Belongs to the eukaryotic ribosomal protein eS4 family.

The chain is Small ribosomal subunit protein eS4 from Hyperthermus butylicus (strain DSM 5456 / JCM 9403 / PLM1-5).